Reading from the N-terminus, the 83-residue chain is Small ribosomal subunit protein bS16 (83 aa).

It belongs to the bacterial ribosomal protein bS16 family.

The protein is Small ribosomal subunit protein bS16 of Pseudomonas putida (strain W619).